The primary structure comprises 402 residues: Omega-3 fatty acid desaturase fat-1 (402 aa).

Helical transmembrane passes span 79 to 99, 101 to 121, 235 to 255, and 260 to 280; these read LVQD…FEYF, LFGY…LFVV, CVIS…IAGS, and FWYY…VTYL.

This sequence belongs to the fatty acid desaturase type 1 family.

The protein resides in the membrane. It carries out the reaction (9Z,12Z)-octadecadienoyl-CoA + 2 Fe(II)-[cytochrome b5] + O2 + 2 H(+) = (9Z,12Z,15Z)-octadecatrienoyl-CoA + 2 Fe(III)-[cytochrome b5] + 2 H2O. The enzyme catalyses (8Z,11Z,14Z)-eicosatrienoyl-CoA + 2 Fe(II)-[cytochrome b5] + O2 + 2 H(+) = (8Z,11Z,14Z,17Z)-eicosatetraenoyl-CoA + 2 Fe(III)-[cytochrome b5] + 2 H2O. It catalyses the reaction (5Z,8Z,11Z,14Z)-eicosatetraenoyl-CoA + 2 Fe(II)-[cytochrome b5] + O2 + 2 H(+) = (5Z,8Z,11Z,14Z,17Z)-eicosapentaenoyl-CoA + 2 Fe(III)-[cytochrome b5] + 2 H2O. The catalysed reaction is (7Z,10Z,13Z,16Z)-docosatetraenoyl-CoA + 2 Fe(II)-[cytochrome b5] + O2 + 2 H(+) = (7Z,10Z,13Z,16Z,19Z)-docosapentaenoyl-CoA + 2 Fe(III)-[cytochrome b5] + 2 H2O. It carries out the reaction (6Z,9Z,12Z)-octadecatrienoyl-CoA + 2 Fe(II)-[cytochrome b5] + O2 + 2 H(+) = (6Z,9Z,12Z,15Z)-octadecatetraenoyl-CoA + 2 Fe(III)-[cytochrome b5] + 2 H2O. The protein operates within lipid metabolism; polyunsaturated fatty acid biosynthesis. In terms of biological role, omega-3 fatty acid desaturase that recognizes a range of 18- and 20-carbon omega-6 substrates. Introduces a double bond in the fatty acid chain three carbons away from terminal methyl group to biosynthesize n-3 (omega-3) polyunsaturated fatty acids (PUFAs) endogenously (PUFAs are essential for membrane structure and many cellular and physiological processes). Acts on a number of substrates like linoleoyl-CoA ((9Z,12Z)-octadecadienoyl-CoA, 18:2n-6), dihomo-gamma-linolenoyl-CoA ((8Z,11Z,14Z)-eicosatrienoyl-CoA, 20:3n-6), and arachidonoyl-CoA ((5Z,8Z,11Z,14Z)-eicosatetraenoyl-CoA, 20:4n-6), to generate alpha-linolenoyl-CoA ((9Z,12Z,15Z)-octadecatrienoyl-CoA, 18:3n-3), (8Z,11Z,14Z,17Z)-eicosatetraenoyl-CoA (20:4n-3) and (5Z,8Z,11Z,14Z,17Z)-eicosapentaenoyl-CoA (20:5n-3) respectively. Unlike plants, Caenorhabditis elegans desaturases seem to use fatty acyl-CoAs as substrates. The protein is Omega-3 fatty acid desaturase fat-1 (fat-1) of Caenorhabditis elegans.